The primary structure comprises 449 residues: tRNA-2-methylthio-N(6)-dimethylallyladenosine synthase (449 aa).

In terms of domain architecture, MTTase N-terminal spans 3–118 (KKVFVKTFGC…LPELLAQREA (116 aa)). Positions 12, 49, 81, 155, 159, and 162 each coordinate [4Fe-4S] cluster. In terms of domain architecture, Radical SAM core spans 141–376 (RVEGASAFVS…VINANIKSIS (236 aa)). In terms of domain architecture, TRAM spans 377–440 (ESRVGTVQRI…AYTLRGEVVT (64 aa)).

Belongs to the methylthiotransferase family. MiaB subfamily. In terms of assembly, monomer. It depends on [4Fe-4S] cluster as a cofactor.

The protein localises to the cytoplasm. It carries out the reaction N(6)-dimethylallyladenosine(37) in tRNA + (sulfur carrier)-SH + AH2 + 2 S-adenosyl-L-methionine = 2-methylsulfanyl-N(6)-dimethylallyladenosine(37) in tRNA + (sulfur carrier)-H + 5'-deoxyadenosine + L-methionine + A + S-adenosyl-L-homocysteine + 2 H(+). Functionally, catalyzes the methylthiolation of N6-(dimethylallyl)adenosine (i(6)A), leading to the formation of 2-methylthio-N6-(dimethylallyl)adenosine (ms(2)i(6)A) at position 37 in tRNAs that read codons beginning with uridine. This is tRNA-2-methylthio-N(6)-dimethylallyladenosine synthase from Paracidovorax citrulli (strain AAC00-1) (Acidovorax citrulli).